Consider the following 661-residue polypeptide: UvrABC system protein B (661 aa).

The 158-residue stretch at 25 to 182 (AGLSSKKRSQ…NDLINLQYER (158 aa)) folds into the Helicase ATP-binding domain. 38–45 (GITGSGKT) contributes to the ATP binding site. A Beta-hairpin motif is present at residues 91–114 (YYDYYQPEAYIARTDTFIEKDSSI). Residues 430–592 (QVEDLISEIQ…IIPKTINRAI (163 aa)) form the Helicase C-terminal domain. Positions 621–656 (KTHIDKLKKEMLKAASNLEFEQAVKLRDQLKTLEEA) constitute a UVR domain.

The protein belongs to the UvrB family. Forms a heterotetramer with UvrA during the search for lesions. Interacts with UvrC in an incision complex.

It localises to the cytoplasm. In terms of biological role, the UvrABC repair system catalyzes the recognition and processing of DNA lesions. A damage recognition complex composed of 2 UvrA and 2 UvrB subunits scans DNA for abnormalities. Upon binding of the UvrA(2)B(2) complex to a putative damaged site, the DNA wraps around one UvrB monomer. DNA wrap is dependent on ATP binding by UvrB and probably causes local melting of the DNA helix, facilitating insertion of UvrB beta-hairpin between the DNA strands. Then UvrB probes one DNA strand for the presence of a lesion. If a lesion is found the UvrA subunits dissociate and the UvrB-DNA preincision complex is formed. This complex is subsequently bound by UvrC and the second UvrB is released. If no lesion is found, the DNA wraps around the other UvrB subunit that will check the other stand for damage. This chain is UvrABC system protein B, found in Rickettsia rickettsii (strain Sheila Smith).